The chain runs to 262 residues: Glutamine-binding protein (262 aa).

Positions 1–26 (MKRKTVWKIWITLALIALLSITALAG) are cleaved as a signal peptide. Cys-27 is lipidated: N-palmitoyl cysteine. Cys-27 is lipidated: S-diacylglycerol cysteine.

Belongs to the bacterial solute-binding protein 3 family.

It is found in the cell membrane. Involved in glutamine-transport system. Interacts with the glutamine-transport system GlnPQ. The protein is Glutamine-binding protein (glnH) of Geobacillus stearothermophilus (Bacillus stearothermophilus).